The chain runs to 222 residues: UPF0758 protein YicR (222 aa).

One can recognise an MPN domain in the interval 100–222; the sequence is PLLSPEMTRE…YVSFAERGWI (123 aa). Zn(2+) contacts are provided by H171, H173, and D184. The JAMM motif motif lies at 171-184; that stretch reads HNHPSGCAEPSKAD.

Belongs to the UPF0758 family. YicR subfamily.

The chain is UPF0758 protein YicR from Escherichia coli (strain K12 / MC4100 / BW2952).